A 240-amino-acid polypeptide reads, in one-letter code: Dihydromonapterin reductase (240 aa).

Tyrosine 152 serves as the catalytic Proton acceptor.

The protein belongs to the short-chain dehydrogenases/reductases (SDR) family. FolM subfamily.

It carries out the reaction (6S)-5,6,7,8-tetrahydrofolate + NADP(+) = 7,8-dihydrofolate + NADPH + H(+). It catalyses the reaction 7,8-dihydromonapterin + NADPH + H(+) = 5,6,7,8-tetrahydromonapterin + NADP(+). Catalyzes the reduction of dihydromonapterin to tetrahydromonapterin. Also has lower activity with dihydrofolate. The sequence is that of Dihydromonapterin reductase (folM) from Shigella flexneri serotype 5b (strain 8401).